The chain runs to 597 residues: Aspartate--tRNA ligase (597 aa).

An L-aspartate-binding site is contributed by E173. The tract at residues 197–200 (QLFK) is aspartate. An L-aspartate-binding site is contributed by R219. Residues 219 to 221 (RDE) and Q228 contribute to the ATP site. An L-aspartate-binding site is contributed by H449. Position 483 (E483) interacts with ATP. Residue R490 participates in L-aspartate binding. 535 to 538 (GLDR) lines the ATP pocket.

The protein belongs to the class-II aminoacyl-tRNA synthetase family. Type 1 subfamily. In terms of assembly, homodimer.

Its subcellular location is the cytoplasm. It carries out the reaction tRNA(Asp) + L-aspartate + ATP = L-aspartyl-tRNA(Asp) + AMP + diphosphate. Catalyzes the attachment of L-aspartate to tRNA(Asp) in a two-step reaction: L-aspartate is first activated by ATP to form Asp-AMP and then transferred to the acceptor end of tRNA(Asp). The polypeptide is Aspartate--tRNA ligase (Shewanella pealeana (strain ATCC 700345 / ANG-SQ1)).